The sequence spans 213 residues: ATP phosphoribosyltransferase (213 aa).

This sequence belongs to the ATP phosphoribosyltransferase family. Short subfamily. Heteromultimer composed of HisG and HisZ subunits.

Its subcellular location is the cytoplasm. It catalyses the reaction 1-(5-phospho-beta-D-ribosyl)-ATP + diphosphate = 5-phospho-alpha-D-ribose 1-diphosphate + ATP. Its pathway is amino-acid biosynthesis; L-histidine biosynthesis; L-histidine from 5-phospho-alpha-D-ribose 1-diphosphate: step 1/9. Catalyzes the condensation of ATP and 5-phosphoribose 1-diphosphate to form N'-(5'-phosphoribosyl)-ATP (PR-ATP). Has a crucial role in the pathway because the rate of histidine biosynthesis seems to be controlled primarily by regulation of HisG enzymatic activity. In Thermoanaerobacter pseudethanolicus (strain ATCC 33223 / 39E) (Clostridium thermohydrosulfuricum), this protein is ATP phosphoribosyltransferase.